The sequence spans 680 residues: MEESSLSRAPSRGGVNFLNVARTYIPNTKVECHYTLPPGTVPSASDWIGIFKVEAACVRDYHTFVWSLVPESVTDGSPIHASVQFQASYLPKPGAQLYQFRYVNRQGRVCGQSPPFQFREPRPMDELVTLEETDGGSDILLVVPKATVLQNQLDESQQERNDLMQLKLQLEGQVTELKSQVQELEKALAAARQEHAELAEQYKGLSRSHGELTEERDILSRQQGDHVARILELEEDIQTISEKVLMKEVELDRVRDSVKALTREQEKLLGQLKEVQADKEQSEAELQMAQQENRRLNLELQEAKDRQEEQSAQAQRLKDKVAQMKDTLGQVQQRVAELEPLKEQLRGAQELAASSQQKAALLGEELASAAGARDRTIAELHRSRLEVAGVNGRLAELSLHLKEEKSQWSKERAGLLQSVEAEKDKILKLSAEILRLEKAVQEEKTQSQVFKTELAREKDSSLVQLSESKRELTELRSALRVLQKEKEQLQEEKQELLEYMRKLEARLEKVADEKWSEDPATEDEEAAVGLSCPAALTDSEDESPEDMRLPPYSLCESGDSGSSPATGPREASPLVVISQPAPIAPQLSGPAEDSSSDSEAEDEKSVLMAAVQSGGEEANLLLPELGSAFYDMASGFAVGPLTEASTGGPATPPWKECPICKERFPVHTQTHTYTHTHTHA.

Positions 1–30 (MEESSLSRAPSRGGVNFLNVARTYIPNTKV) are p300 KIX-binding. Residues 1–190 (MEESSLSRAP…VQELEKALAA (190 aa)) are N-terminal AD (CTNNB1 binding site). At Ser4 the chain carries Phosphoserine. An interaction with GATA1 region spans residues 45–125 (SDWIGIFKVE…FQFREPRPMD (81 aa)). Coiled coils occupy residues 145–205 (KATV…YKGL), 232–339 (ELEE…AELE), and 417–514 (QSVE…ADEK). Residues 501–680 (RKLEARLEKV…HTYTHTHTHA (180 aa)) are C-terminal AD (CTNNB1 binding site); interaction with CCAR1. Residues 511–606 (ADEKWSEDPA…DSEAEDEKSV (96 aa)) form a disordered region. The UBZ1-type zinc-finger motif lies at 654 to 679 (WKECPICKERFPVHTQTHTYTHTHTH). The Zn(2+) site is built by Cys657, Cys660, His675, and His679.

This sequence belongs to the CALCOCO family. As to quaternary structure, part of a calphoglin complex consisting of CALCOCO1, PPA1 and PGM. Interacts with the bHLH-PAS domains of GRIP1, AHR and ARNT. Interacts with CTNNB1 via both its N- and C-terminal regions. Interacts with EP300. Interacts with CCAR1 (via N-terminus) and GATA1.

The protein resides in the cytoplasm. It localises to the nucleus. In terms of biological role, functions as a coactivator for aryl hydrocarbon and nuclear receptors (NR). Recruited to promoters through its contact with the N-terminal basic helix-loop-helix-Per-Arnt-Sim (PAS) domain of transcription factors or coactivators, such as NCOA2. During ER-activation acts synergistically in combination with other NCOA2-binding proteins, such as EP300, CREBBP and CARM1. Involved in the transcriptional activation of target genes in the Wnt/CTNNB1 pathway. Functions as a secondary coactivator in LEF1-mediated transcriptional activation via its interaction with CTNNB1. Coactivator function for nuclear receptors and LEF1/CTNNB1 involves differential utilization of two different activation regions. In association with CCAR1 enhances GATA1- and MED1-mediated transcriptional activation from the gamma-globin promoter during erythroid differentiation of K562 erythroleukemia cells. Seems to enhance inorganic pyrophosphatase thus activating phosphogluomutase (PMG). Probably functions as a component of the calphoglin complex, which is involved in linking cellular metabolism (phosphate and glucose metabolism) with other core functions including protein synthesis and degradation, calcium signaling and cell growth. This is Calcium-binding and coiled-coil domain-containing protein 1 (CALCOCO1) from Bos taurus (Bovine).